The chain runs to 137 residues: Putative pre-16S rRNA nuclease (137 aa).

It belongs to the YqgF nuclease family.

The protein localises to the cytoplasm. Could be a nuclease involved in processing of the 5'-end of pre-16S rRNA. The protein is Putative pre-16S rRNA nuclease of Bacillus cytotoxicus (strain DSM 22905 / CIP 110041 / 391-98 / NVH 391-98).